Consider the following 262-residue polypeptide: 3-methyl-2-oxobutanoate hydroxymethyltransferase (262 aa).

2 residues coordinate Mg(2+): D42 and D81. Residues 42–43, D81, and K110 each bind 3-methyl-2-oxobutanoate; that span reads DS. E112 is a Mg(2+) binding site. E180 (proton acceptor) is an active-site residue.

It belongs to the PanB family. In terms of assembly, homodecamer; pentamer of dimers. Mg(2+) serves as cofactor.

It is found in the cytoplasm. It catalyses the reaction 3-methyl-2-oxobutanoate + (6R)-5,10-methylene-5,6,7,8-tetrahydrofolate + H2O = 2-dehydropantoate + (6S)-5,6,7,8-tetrahydrofolate. Its pathway is cofactor biosynthesis; (R)-pantothenate biosynthesis; (R)-pantoate from 3-methyl-2-oxobutanoate: step 1/2. Its function is as follows. Catalyzes the reversible reaction in which hydroxymethyl group from 5,10-methylenetetrahydrofolate is transferred onto alpha-ketoisovalerate to form ketopantoate. In Legionella pneumophila subsp. pneumophila (strain Philadelphia 1 / ATCC 33152 / DSM 7513), this protein is 3-methyl-2-oxobutanoate hydroxymethyltransferase.